The primary structure comprises 636 residues: Protein SOSEKI 2 (636 aa).

The DIX-like oligomerization domain stretch occupies residues 9 to 103 (HKIEVIYLLS…YVLKALEVMD (95 aa)). 4 disordered regions span residues 164 to 188 (VHNN…SRVP), 281 to 304 (HGRL…TVDI), 340 to 393 (VEGS…TSAK), and 499 to 524 (LGSG…VSRP). Polar residues-rich tracts occupy residues 375-390 (SSKS…TYET) and 499-510 (LGSGQASESFSP).

It belongs to the SOSEKI family. Homodimer. Forms long polymer filaments with other SOKs proteins polymers crucial for polar localization and biological activity.

It is found in the cell membrane. Functionally, SOSEKI proteins locally interpret global polarity cues and can influence cell division orientation to coordinate cell polarization relative to body axes. The sequence is that of Protein SOSEKI 2 from Physcomitrium patens (Spreading-leaved earth moss).